A 267-amino-acid chain; its full sequence is Thiamine pyrophosphokinase 2 (267 aa).

This sequence belongs to the thiamine pyrophosphokinase family. As to expression, expressed in leaves and at lower levels in flowers.

It is found in the cytoplasm. The protein localises to the cytosol. The catalysed reaction is thiamine + ATP = thiamine diphosphate + AMP + H(+). It functions in the pathway cofactor biosynthesis; thiamine diphosphate biosynthesis; thiamine diphosphate from thiamine: step 1/1. Functionally, catalyzes the phosphorylation of thiamine to thiamine pyrophosphate (TPP). TPP is an active cofactor for enzymes involved in glycolysis and energy production. Plant leaves require high levels of TPP for photosynthesis and carbohydrate metabolism. The chain is Thiamine pyrophosphokinase 2 from Arabidopsis thaliana (Mouse-ear cress).